Here is a 326-residue protein sequence, read N- to C-terminus: MLKILFMGTPEFAAVSLRALLEAGYPVVGVVTQPDKPAGRGGKLRPSPVKEVALAHGLPVFQPRRLRRPEVVAQLKELGSDLTVVVAYGQILSREALEISPLGSINVHASLLPRWRGAAPIQRAIMAGDVETGVCTMWMDEGMDTGDVCLTARVPIGPDTTGGELHDELARVGAELLLETVRRVEAGDAPRIPQPAEGVTYAAKLEPADEVIDWARPAEELYNQIRALNPWPGAYTNGPRGRLKIWRASVVPNPEPGAEPGTVVALVRREGFTVAAGDGALLVREVQPHGKARMDAQSFVNGGGVQVGTRFSPPEAPQREPAPGEA.

110–113 (SLLP) lines the (6S)-5,6,7,8-tetrahydrofolate pocket. Residues 307–326 (VGTRFSPPEAPQREPAPGEA) form a disordered region.

It belongs to the Fmt family.

It carries out the reaction L-methionyl-tRNA(fMet) + (6R)-10-formyltetrahydrofolate = N-formyl-L-methionyl-tRNA(fMet) + (6S)-5,6,7,8-tetrahydrofolate + H(+). Functionally, attaches a formyl group to the free amino group of methionyl-tRNA(fMet). The formyl group appears to play a dual role in the initiator identity of N-formylmethionyl-tRNA by promoting its recognition by IF2 and preventing the misappropriation of this tRNA by the elongation apparatus. The sequence is that of Methionyl-tRNA formyltransferase from Symbiobacterium thermophilum (strain DSM 24528 / JCM 14929 / IAM 14863 / T).